Consider the following 261-residue polypeptide: MTHQTHAYHMVNPSPWPLTGALSALLMTSGLIMWFHFNSTTLLMLGLTTNMLTMYQWWRDVVRESTFQGHHTPNVQKGLRYGMILFIISEVLFFTGFFWAFYHSSLAPTPELGGCWPPTGINPLNPLEVPLLNTSVLLASGVSITWAHHSLMEGNRNHMLQALFITIALGVYFTLLQASEYYEAPFTISDGVYGSTFFVATGFHGLHVIIGSTFLIVCFFRQLKFHFTSNHHFGFEAAAWYWHFVDVVWLFLYVSIYWWGS.

Topologically, residues 1-15 (MTHQTHAYHMVNPSP) are mitochondrial matrix. The helical transmembrane segment at 16 to 34 (WPLTGALSALLMTSGLIMW) threads the bilayer. The Mitochondrial intermembrane portion of the chain corresponds to 35–40 (FHFNST). Residues 41-66 (TLLMLGLTTNMLTMYQWWRDVVREST) form a helical membrane-spanning segment. Topologically, residues 67-72 (FQGHHT) are mitochondrial matrix. Residues 73–105 (PNVQKGLRYGMILFIISEVLFFTGFFWAFYHSS) form a helical membrane-spanning segment. Residues 106 to 128 (LAPTPELGGCWPPTGINPLNPLE) lie on the Mitochondrial intermembrane side of the membrane. A helical membrane pass occupies residues 129–152 (VPLLNTSVLLASGVSITWAHHSLM). The Mitochondrial matrix portion of the chain corresponds to 153-155 (EGN). Residues 156–183 (RNHMLQALFITIALGVYFTLLQASEYYE) traverse the membrane as a helical segment. The Mitochondrial intermembrane segment spans residues 184–190 (APFTISD). A helical membrane pass occupies residues 191–223 (GVYGSTFFVATGFHGLHVIIGSTFLIVCFFRQL). Residues 224–232 (KFHFTSNHH) are Mitochondrial matrix-facing. A helical membrane pass occupies residues 233–256 (FGFEAAAWYWHFVDVVWLFLYVSI). Over 257-261 (YWWGS) the chain is Mitochondrial intermembrane.

This sequence belongs to the cytochrome c oxidase subunit 3 family. As to quaternary structure, component of the cytochrome c oxidase (complex IV, CIV), a multisubunit enzyme composed of 14 subunits. The complex is composed of a catalytic core of 3 subunits MT-CO1, MT-CO2 and MT-CO3, encoded in the mitochondrial DNA, and 11 supernumerary subunits COX4I, COX5A, COX5B, COX6A, COX6B, COX6C, COX7A, COX7B, COX7C, COX8 and NDUFA4, which are encoded in the nuclear genome. The complex exists as a monomer or a dimer and forms supercomplexes (SCs) in the inner mitochondrial membrane with NADH-ubiquinone oxidoreductase (complex I, CI) and ubiquinol-cytochrome c oxidoreductase (cytochrome b-c1 complex, complex III, CIII), resulting in different assemblies (supercomplex SCI(1)III(2)IV(1) and megacomplex MCI(2)III(2)IV(2)).

It localises to the mitochondrion inner membrane. The catalysed reaction is 4 Fe(II)-[cytochrome c] + O2 + 8 H(+)(in) = 4 Fe(III)-[cytochrome c] + 2 H2O + 4 H(+)(out). Component of the cytochrome c oxidase, the last enzyme in the mitochondrial electron transport chain which drives oxidative phosphorylation. The respiratory chain contains 3 multisubunit complexes succinate dehydrogenase (complex II, CII), ubiquinol-cytochrome c oxidoreductase (cytochrome b-c1 complex, complex III, CIII) and cytochrome c oxidase (complex IV, CIV), that cooperate to transfer electrons derived from NADH and succinate to molecular oxygen, creating an electrochemical gradient over the inner membrane that drives transmembrane transport and the ATP synthase. Cytochrome c oxidase is the component of the respiratory chain that catalyzes the reduction of oxygen to water. Electrons originating from reduced cytochrome c in the intermembrane space (IMS) are transferred via the dinuclear copper A center (CU(A)) of subunit 2 and heme A of subunit 1 to the active site in subunit 1, a binuclear center (BNC) formed by heme A3 and copper B (CU(B)). The BNC reduces molecular oxygen to 2 water molecules using 4 electrons from cytochrome c in the IMS and 4 protons from the mitochondrial matrix. This Gazella leptoceros (Sand gazelle) protein is Cytochrome c oxidase subunit 3 (MT-CO3).